Here is a 541-residue protein sequence, read N- to C-terminus: Chaperonin GroEL 1 (541 aa).

ATP-binding positions include 29 to 32 (TLGP), 86 to 90 (DGTTT), Gly413, 477 to 479 (NAA), and Asp493.

This sequence belongs to the chaperonin (HSP60) family. Forms a cylinder of 14 subunits composed of two heptameric rings stacked back-to-back. Interacts with the co-chaperonin GroES.

Its subcellular location is the cytoplasm. The enzyme catalyses ATP + H2O + a folded polypeptide = ADP + phosphate + an unfolded polypeptide.. In terms of biological role, together with its co-chaperonin GroES, plays an essential role in assisting protein folding. The GroEL-GroES system forms a nano-cage that allows encapsulation of the non-native substrate proteins and provides a physical environment optimized to promote and accelerate protein folding. In Nocardioides sp. (strain ATCC BAA-499 / JS614), this protein is Chaperonin GroEL 1.